Here is a 78-residue protein sequence, read N- to C-terminus: Putative membrane protein insertion efficiency factor (78 aa).

It belongs to the UPF0161 family.

The protein localises to the cell inner membrane. Its function is as follows. Could be involved in insertion of integral membrane proteins into the membrane. The chain is Putative membrane protein insertion efficiency factor from Thiobacillus denitrificans (strain ATCC 25259 / T1).